Consider the following 267-residue polypeptide: Tryptophan synthase alpha chain (267 aa).

Residues Glu-49 and Asp-60 each act as proton acceptor in the active site.

This sequence belongs to the TrpA family. Tetramer of two alpha and two beta chains.

The catalysed reaction is (1S,2R)-1-C-(indol-3-yl)glycerol 3-phosphate + L-serine = D-glyceraldehyde 3-phosphate + L-tryptophan + H2O. It functions in the pathway amino-acid biosynthesis; L-tryptophan biosynthesis; L-tryptophan from chorismate: step 5/5. The alpha subunit is responsible for the aldol cleavage of indoleglycerol phosphate to indole and glyceraldehyde 3-phosphate. The sequence is that of Tryptophan synthase alpha chain from Salinispora tropica (strain ATCC BAA-916 / DSM 44818 / JCM 13857 / NBRC 105044 / CNB-440).